Consider the following 196-residue polypeptide: Molybdopterin synthase catalytic subunit (196 aa).

Substrate is bound by residues 110-111 (HR), Lys-126, and 133-135 (KKE). Residues 142 to 196 (GGIWRANRDGAVGERVDEDEEKKKPDMGPHGPILRPSRPGERGHGPVVRNHQLGS) are disordered. The segment covering 147–168 (ANRDGAVGERVDEDEEKKKPDM) has biased composition (basic and acidic residues).

It belongs to the MoaE family. MOCS2B subfamily. Heterotetramer; composed of 2 small (MOCS2A) and 2 large (MOCS2B) subunits.

Its subcellular location is the cytoplasm. The catalysed reaction is 2 [molybdopterin-synthase sulfur-carrier protein]-C-terminal-Gly-aminoethanethioate + cyclic pyranopterin phosphate + H2O = molybdopterin + 2 [molybdopterin-synthase sulfur-carrier protein]-C-terminal Gly-Gly + 2 H(+). The protein operates within cofactor biosynthesis; molybdopterin biosynthesis. Catalytic subunit of the molybdopterin synthase complex, a complex that catalyzes the conversion of precursor Z into molybdopterin. Acts by mediating the incorporation of 2 sulfur atoms from thiocarboxylated MOCS2A into precursor Z to generate a dithiolene group. The protein is Molybdopterin synthase catalytic subunit of Sclerotinia sclerotiorum (strain ATCC 18683 / 1980 / Ss-1) (White mold).